A 496-amino-acid chain; its full sequence is Genome polyprotein (496 aa).

Residues 1 to 447 (SRCTHLENRD…HTVLGGAFNS (447 aa)) are Extracellular-facing. Cystine bridges form between C3-C30, C60-C116, C60-C121, C74-C105, C92-C116, and C92-C121. The tract at residues 98-111 (DRGWGNHCGLFGKG) is fusion peptide. Residue N154 is glycosylated (N-linked (GlcNAc...) asparagine; by host). Intrachain disulfides connect C186–C290 and C307–C338. Residues 448-468 (IFGGVGFLPKLLMGVALAWLG) form a helical membrane-spanning segment. Residues 469-479 (LNTRNPTMSMS) lie on the Cytoplasmic side of the membrane. The helical transmembrane segment at 480-496 (FLMAGGLVLAMTLGVGA) threads the bilayer.

In terms of assembly, homodimer; in the endoplasmic reticulum and Golgi. Post-translationally, N-glycosylated.

The protein localises to the virion membrane. It is found in the host endoplasmic reticulum membrane. In terms of biological role, binds to host cell surface receptor and mediates fusion between viral and cellular membranes. Envelope protein is synthesized in the endoplasmic reticulum in the form of heterodimer with protein prM. They play a role in virion budding in the ER, and the newly formed immature particle is covered with 60 spikes composed of heterodimer between precursor prM and envelope protein E. The virion is transported to the Golgi apparatus where the low pH causes dissociation of PrM-E heterodimers and formation of E homodimers. prM-E cleavage is ineficient, and many virions are only partially matured. These uncleaved prM would play a role in immune evasion. The sequence is that of Genome polyprotein from Bos taurus (Bovine).